Here is a 295-residue protein sequence, read N- to C-terminus: sn-glycerol-3-phosphate transport system permease protein UgpA (295 aa).

Topologically, residues 1–11 are cytoplasmic; sequence MSSFRPVFRSR. A helical membrane pass occupies residues 12–32; that stretch reads WLPYLLVAPQLVITVIFFIWP. The Periplasmic portion of the chain corresponds to 33–80; the sequence is AGEALWYSLQSVDPFGFSSQFVGLENFVALFHDSYYLDAFWTTIKFSA. The 209-residue stretch at 76 to 284 folds into the ABC transmembrane type-1 domain; it reads IKFSALVTFS…FLVIILTVVQ (209 aa). A helical transmembrane segment spans residues 81-101; sequence LVTFSGLLVSLFFAALVDYVV. Over 102–109 the chain is Cytoplasmic; that stretch reads RGSRFYQT. Residues 110–130 form a helical membrane-spanning segment; sequence LMLLPYAVAPAVAAVLWIFLF. Topologically, residues 131 to 157 are periplasmic; sequence NPGRGLITHFLGEFGYDWNHAQNSGQA. A helical membrane pass occupies residues 158–178; that stretch reads MFLVVFASVWKQISYNFLFFF. At 179–207 the chain is on the cytoplasmic side; sequence AALQSIPRSLVEAAAIDGAGPIRRFFRLS. Residues 208 to 228 traverse the membrane as a helical segment; the sequence is LPLIAPVSFFLLVVNLVYAFF. The Periplasmic segment spans residues 229-262; sequence DTFPVIDAATAGGPVQATTTLIYKIYREGFTGLD. Residues 263–283 traverse the membrane as a helical segment; that stretch reads LSASAAQSVVLMFLVIILTVV. The Cytoplasmic segment spans residues 284 to 295; that stretch reads QFRYVESKVRYQ.

Belongs to the binding-protein-dependent transport system permease family. UgpAE subfamily. As to quaternary structure, the complex is composed of two ATP-binding proteins (UgpC), two transmembrane proteins (UgpA and UgpE) and a solute-binding protein (UgpB).

It localises to the cell inner membrane. Functionally, part of the ABC transporter complex UgpBAEC involved in sn-glycerol-3-phosphate (G3P) import. Probably responsible for the translocation of the substrate across the membrane. This is sn-glycerol-3-phosphate transport system permease protein UgpA (ugpA) from Salmonella choleraesuis (strain SC-B67).